The following is a 270-amino-acid chain: ParA family protein MPN_688 (270 aa).

This sequence belongs to the ParA family.

This is ParA family protein MPN_688 from Mycoplasma pneumoniae (strain ATCC 29342 / M129 / Subtype 1) (Mycoplasmoides pneumoniae).